The sequence spans 120 residues: Protein crumbs homolog 3 (120 aa).

An N-terminal signal peptide occupies residues 1-26 (MANPGLGLLLALGLPFLLARWGRAWG). Residues 27 to 59 (QIQTTSANENSTVLPSSTSSSSDGNLRPEAITA) are Extracellular-facing. Asn-36 carries an N-linked (GlcNAc...) asparagine glycan. A helical transmembrane segment spans residues 60-80 (IIVVFSLLAALLLAVGLALLV). Topologically, residues 81–120 (RKLREKRQTEGTYRPSSEEQVGARVPPTPNLKLPPEERLI) are cytoplasmic. The tract at residues 84-120 (REKRQTEGTYRPSSEEQVGARVPPTPNLKLPPEERLI) is interaction with EPB41L5. Positions 87–120 (RQTEGTYRPSSEEQVGARVPPTPNLKLPPEERLI) are disordered. Polar residues predominate over residues 90–99 (EGTYRPSSEE). A PDZ-binding motif is present at residues 117 to 120 (ERLI).

As to quaternary structure, component of a complex composed of CRB3, PALS1 and PATJ. Interacts (via C-terminus) with PALS1 (via PDZ domain). Interacts with PARD6A. Interacts (via intracellular domain) with EPB41L5. Interacts with WDR83. In terms of tissue distribution, preferentially expressed in epithelial tissues. Expressed at high levels in lung, kidney, and colon. Expressed at high levels in retina, colon and mammary glands. Moderately expressed in liver, spleen, pancreas and prostate. Moderately to weakly expressed in the placenta. Weakly expressed in skeletal muscle and small intestine.

It localises to the apical cell membrane. The protein localises to the cell junction. The protein resides in the tight junction. Involved in the establishment of cell polarity in mammalian epithelial cells. Regulates the morphogenesis of tight junctions. Involved in promoting phosphorylation and cytoplasmic retention of transcriptional coactivators YAP1 and WWTR1/TAZ which leads to suppression of TGFB1-dependent transcription of target genes such as CCN2/CTGF, SERPINE1/PAI1, SNAI1/SNAIL1 and SMAD7. This Homo sapiens (Human) protein is Protein crumbs homolog 3.